The primary structure comprises 292 residues: Protein/nucleic acid deglycase HchA (292 aa).

Over residues 1–12 (MSQDVNELSKQP) the composition is skewed to polar residues. Residues 1–23 (MSQDVNELSKQPTPDKAEDNAFF) form a disordered region. C190 functions as the Nucleophile in the catalytic mechanism.

Belongs to the peptidase C56 family. HchA subfamily.

The protein localises to the cytoplasm. It catalyses the reaction N(omega)-(1-hydroxy-2-oxopropyl)-L-arginyl-[protein] + H2O = lactate + L-arginyl-[protein] + H(+). The enzyme catalyses N(6)-(1-hydroxy-2-oxopropyl)-L-lysyl-[protein] + H2O = lactate + L-lysyl-[protein] + H(+). The catalysed reaction is S-(1-hydroxy-2-oxopropyl)-L-cysteinyl-[protein] + H2O = lactate + L-cysteinyl-[protein] + H(+). It carries out the reaction N(omega)-(1-hydroxy-2-oxoethyl)-L-arginyl-[protein] + H2O = L-arginyl-[protein] + glycolate + H(+). It catalyses the reaction N(6)-(1-hydroxy-2-oxoethyl)-L-lysyl-[protein] + H2O = glycolate + L-lysyl-[protein] + H(+). The enzyme catalyses S-(1-hydroxy-2-oxoethyl)-L-cysteinyl-[protein] + H2O = glycolate + L-cysteinyl-[protein] + H(+). The catalysed reaction is N(2)-(1-hydroxy-2-oxopropyl)-dGTP + H2O = lactate + dGTP + H(+). It carries out the reaction N(2)-(1-hydroxy-2-oxopropyl)-GTP + H2O = lactate + GTP + H(+). It catalyses the reaction N(2)-(1-hydroxy-2-oxopropyl)-GDP + H2O = lactate + GDP + H(+). The enzyme catalyses N(2)-(1-hydroxy-2-oxopropyl)-GMP + H2O = lactate + GMP + H(+). The catalysed reaction is N(2)-(1-hydroxy-2-oxoethyl)-dGTP + H2O = dGTP + glycolate + H(+). It carries out the reaction N(2)-(1-hydroxy-2-oxoethyl)-GTP + H2O = glycolate + GTP + H(+). It catalyses the reaction N(2)-(1-hydroxy-2-oxoethyl)-GDP + H2O = glycolate + GDP + H(+). The enzyme catalyses N(2)-(1-hydroxy-2-oxoethyl)-GMP + H2O = glycolate + GMP + H(+). The catalysed reaction is an N(2)-(1-hydroxy-2-oxopropyl)-guanosine in RNA + H2O = a guanosine in RNA + lactate + H(+). It carries out the reaction an N(2)-(1-hydroxy-2-oxopropyl)-2'-deoxyguanosine in DNA + H2O = a 2'-deoxyguanosine in DNA + lactate + H(+). It catalyses the reaction an N(2)-(1-hydroxy-2-oxoethyl)-guanosine in RNA + H2O = a guanosine in RNA + glycolate + H(+). The enzyme catalyses an N(2)-(1-hydroxy-2-oxoethyl)-2'-deoxyguanosine in DNA + H2O = a 2'-deoxyguanosine in DNA + glycolate + H(+). In terms of biological role, protein and nucleotide deglycase that catalyzes the deglycation of the Maillard adducts formed between amino groups of proteins or nucleotides and reactive carbonyl groups of glyoxals. Thus, functions as a protein deglycase that repairs methylglyoxal- and glyoxal-glycated proteins, and releases repaired proteins and lactate or glycolate, respectively. Deglycates cysteine, arginine and lysine residues in proteins, and thus reactivates these proteins by reversing glycation by glyoxals. Acts on early glycation intermediates (hemithioacetals and aminocarbinols), preventing the formation of Schiff bases and advanced glycation endproducts (AGE). Also functions as a nucleotide deglycase able to repair glycated guanine in the free nucleotide pool (GTP, GDP, GMP, dGTP) and in DNA and RNA. Is thus involved in a major nucleotide repair system named guanine glycation repair (GG repair), dedicated to reversing methylglyoxal and glyoxal damage via nucleotide sanitization and direct nucleic acid repair. Plays an important role in protecting cells from carbonyl stress. The chain is Protein/nucleic acid deglycase HchA from Staphylococcus aureus (strain Mu3 / ATCC 700698).